A 199-amino-acid polypeptide reads, in one-letter code: Dephospho-CoA kinase (199 aa).

The DPCK domain maps to 2 to 199 (KIAVTGGYSS…FVADRIEKKK (198 aa)). 10 to 15 (SSGKSS) serves as a coordination point for ATP.

Belongs to the CoaE family.

It is found in the cytoplasm. The enzyme catalyses 3'-dephospho-CoA + ATP = ADP + CoA + H(+). It functions in the pathway cofactor biosynthesis; coenzyme A biosynthesis; CoA from (R)-pantothenate: step 5/5. Its function is as follows. Catalyzes the phosphorylation of the 3'-hydroxyl group of dephosphocoenzyme A to form coenzyme A. This chain is Dephospho-CoA kinase, found in Desulfotalea psychrophila (strain LSv54 / DSM 12343).